The chain runs to 1235 residues: Chitin synthase 4 (1235 aa).

The span at 1–11 (MSLPRRPGPSP) shows a compositional bias: pro residues. The interval 1-203 (MSLPRRPGPS…ASKGKREKSG (203 aa)) is disordered. Residues 1-212 (MSLPRRPGPS…GGLPTPSFWN (212 aa)) are Cytoplasmic-facing. Over residues 19–28 (YRQSGSRRSR) the composition is skewed to basic residues. Positions 46-59 (PSQQQRVPSISSFP) are enriched in polar residues. The segment covering 94–107 (IRPERNRIGKDHPN) has biased composition (basic and acidic residues). Positions 116-125 (NMNTLPSSTG) are enriched in polar residues. The segment covering 169-187 (ETEKSGDERRRRRKSDTTK) has biased composition (basic and acidic residues). Basic residues predominate over residues 188-199 (HGKIVKASKGKR). A helical membrane pass occupies residues 213–233 (IYCGFVTFWCPGFVLKCFGMP). Residues 234-244 (EMAQQRAWREK) lie on the Extracellular side of the membrane. A helical membrane pass occupies residues 245–265 (MGLISIILLIMGFVGFITFGF). Over 266–514 (TQVVCGKPPL…ASKVVLYVSL (249 aa)) the chain is Cytoplasmic. A helical transmembrane segment spans residues 515–535 (VLILAVVLARFVLALIFQWFI). Over 536-1065 (SKTYAAAKTS…SMQFIVGIEL (530 aa)) the chain is Extracellular. Residues 545–592 (SQTSDQRKRNRQIEDWTEDIYRAPPRLPGEVGSSVAGSSDRQSKRSSA) form a disordered region. A compositionally biased stretch (basic and acidic residues) spans 549–558 (DQRKRNRQIE). N-linked (GlcNAc...) asparagine glycosylation occurs at Asn-639. Residues 645-670 (FLKSDAYGSSSSPADGPGPAGFIHEA) form a disordered region. Residues 648–665 (SDAYGSSSSPADGPGPAG) show a composition bias toward low complexity. Residue Asn-1034 is glycosylated (N-linked (GlcNAc...) asparagine). A helical transmembrane segment spans residues 1066 to 1086 (IGTLVLPAAIAFTFYVVIISI). Residues 1087 to 1092 (INSPPQ) are Cytoplasmic-facing. The helical transmembrane segment at 1093 to 1113 (IIPLVLLGLILGLPAILVVVT) threads the bilayer. Over 1114 to 1116 (AHS) the chain is Extracellular. A helical membrane pass occupies residues 1117–1137 (WSYIIWMFIYLLSLPVWNFVL). Residues 1138–1235 (PTYAFWKFDD…RHFDDYFSDA (98 aa)) lie on the Cytoplasmic side of the membrane. The disordered stretch occupies residues 1201–1235 (RDNVISGVGGSNGWGSSQPRGHEQGRHFDDYFSDA). The span at 1220 to 1235 (RGHEQGRHFDDYFSDA) shows a compositional bias: basic and acidic residues.

Belongs to the chitin synthase family. Class IV subfamily.

Its subcellular location is the cell membrane. The catalysed reaction is [(1-&gt;4)-N-acetyl-beta-D-glucosaminyl](n) + UDP-N-acetyl-alpha-D-glucosamine = [(1-&gt;4)-N-acetyl-beta-D-glucosaminyl](n+1) + UDP + H(+). Its function is as follows. Polymerizes chitin, a structural polymer of the cell wall and septum, by transferring the sugar moiety of UDP-GlcNAc to the non-reducing end of the growing chitin polymer. This is Chitin synthase 4 (chs-4) from Neurospora crassa (strain ATCC 24698 / 74-OR23-1A / CBS 708.71 / DSM 1257 / FGSC 987).